A 300-amino-acid chain; its full sequence is 3-dehydrocarnitine:acetyl-CoA trimethylamine transferase (300 aa).

3 residues coordinate Zn(2+): histidine 51, histidine 53, and glutamate 254.

Belongs to the BKACE family. In terms of assembly, homotetramer. It depends on Zn(2+) as a cofactor.

The enzyme catalyses 3-dehydrocarnitine + acetyl-CoA = N,N,N-trimethylglycyl-CoA + acetoacetate. It participates in amine and polyamine metabolism; carnitine metabolism. Catalyzes the condensation of dehydrocarnitine and acetyl-CoA, forming acetoacetate and betainyl-CoA (N,N,N-trimethylglycyl-CoA). Is involved in a L-carnitine degradation pathway that allows R.meliloti to grow on L-carnitine as the sole source of carbon and nitrogen. This chain is 3-dehydrocarnitine:acetyl-CoA trimethylamine transferase, found in Rhizobium meliloti (strain 1021) (Ensifer meliloti).